The following is a 608-amino-acid chain: CTP synthase (608 aa).

Residues 1–271 (MGQAHITKHI…DAYVVRRLGL (271 aa)) form an amidoligase domain region. Residue serine 18 coordinates CTP. UTP is bound at residue serine 18. Residues 19–24 (SLGKGL) and aspartate 76 contribute to the ATP site. Residues aspartate 76 and glutamate 145 each contribute to the Mg(2+) site. Residues 152–154 (DIE), 192–197 (KTKPTQ), and lysine 228 contribute to the CTP site. Residues 192–197 (KTKPTQ) and lysine 228 contribute to the UTP site. A Glutamine amidotransferase type-1 domain is found at 296-545 (TIAIVGKYVD…VAAAVAHADR (250 aa)). Residue glycine 359 coordinates L-glutamine. Cysteine 386 serves as the catalytic Nucleophile; for glutamine hydrolysis. Residues 387 to 390 (LGLQ), glutamate 410, and arginine 471 contribute to the L-glutamine site. Residues histidine 518 and glutamate 520 contribute to the active site. The segment at 550–608 (LPVDLPSEDAPTPENGVPENGAAQTRGVTAGRSGGSIRRGASASRPSVSSNGTAALVSP) is disordered. Residues 584 to 594 (GSIRRGASASR) show a composition bias toward low complexity.

This sequence belongs to the CTP synthase family. In terms of assembly, homotetramer.

The enzyme catalyses UTP + L-glutamine + ATP + H2O = CTP + L-glutamate + ADP + phosphate + 2 H(+). The catalysed reaction is L-glutamine + H2O = L-glutamate + NH4(+). It catalyses the reaction UTP + NH4(+) + ATP = CTP + ADP + phosphate + 2 H(+). The protein operates within pyrimidine metabolism; CTP biosynthesis via de novo pathway; CTP from UDP: step 2/2. Its activity is regulated as follows. Allosterically activated by GTP, when glutamine is the substrate; GTP has no effect on the reaction when ammonia is the substrate. The allosteric effector GTP functions by stabilizing the protein conformation that binds the tetrahedral intermediate(s) formed during glutamine hydrolysis. Inhibited by the product CTP, via allosteric rather than competitive inhibition. Catalyzes the ATP-dependent amination of UTP to CTP with either L-glutamine or ammonia as the source of nitrogen. Regulates intracellular CTP levels through interactions with the four ribonucleotide triphosphates. This Frankia casuarinae (strain DSM 45818 / CECT 9043 / HFP020203 / CcI3) protein is CTP synthase.